A 135-amino-acid chain; its full sequence is Protein PilG (135 aa).

The Response regulatory domain occupies 9–125; it reads KVMVIDDSKT…ELLGAIKAHV (117 aa). A 4-aspartylphosphate modification is found at aspartate 58.

In terms of processing, phosphorylated.

In terms of biological role, plays an essential role in both cAMP-dependent and independent regulation of twitching motility. Regulates the cAMP-independent coordination of type IV pilus (T4P) biogenesis and retraction that plays a role in surface and host cell adhesion, colonization, biofilm maturation, virulence, and twitching. In addition, phosphorylated PilG is necessary for cAMP production via regulation of the adenylate cyclase CyaB. Acts therefore as a response regulator of the chemosensory system/Chp system. This is Protein PilG (pilG) from Pseudomonas aeruginosa (strain ATCC 15692 / DSM 22644 / CIP 104116 / JCM 14847 / LMG 12228 / 1C / PRS 101 / PAO1).